A 638-amino-acid chain; its full sequence is LIM domain kinase 2 (638 aa).

2 LIM zinc-binding domains span residues 12 to 63 (CRGC…CHKD) and 72 to 124 (CHGC…CGKC). The region spanning 152-239 (LISMPATTEC…TLQLLIEHDP (88 aa)) is the PDZ domain. At threonine 210 the chain carries Phosphothreonine. The tract at residues 255–304 (PHMQSTGHTLMLSTLDTKENQEGTLRRRSLRRSNSISKSPGPSSPKEPLL) is disordered. A compositionally biased stretch (polar residues) spans 257-269 (MQSTGHTLMLSTL). Basic and acidic residues predominate over residues 270–279 (DTKENQEGTL). A compositionally biased stretch (low complexity) spans 286 to 304 (RSNSISKSPGPSSPKEPLL). Residues serine 293 and serine 298 each carry the phosphoserine modification. The region spanning 331 to 608 (LIHGEVLGKG…DSFEALSLFL (278 aa)) is the Protein kinase domain. Residues 337-345 (LGKGFFGQA) and lysine 360 each bind ATP. Aspartate 451 is a catalytic residue. The residue at position 505 (threonine 505) is a Phosphothreonine; by ROCK1 and CDC42BP.

This sequence belongs to the protein kinase superfamily. TKL Ser/Thr protein kinase family. As to quaternary structure, binds ROCK1 and MARF1. Interacts with NISCH. In terms of processing, phosphorylated on serine and/or threonine residues by ROCK1. Specifically expressed in the testes.

Its subcellular location is the cytoplasm. The protein localises to the cytoskeleton. The protein resides in the spindle. It is found in the microtubule organizing center. It localises to the centrosome. Its subcellular location is the nucleus. The protein localises to the perinuclear region. It carries out the reaction L-seryl-[protein] + ATP = O-phospho-L-seryl-[protein] + ADP + H(+). The catalysed reaction is L-threonyl-[protein] + ATP = O-phospho-L-threonyl-[protein] + ADP + H(+). Its function is as follows. Serine/threonine-protein kinase that plays an essential role in the regulation of actin filament dynamics. Acts downstream of several Rho family GTPase signal transduction pathways. Involved in astral microtubule organization and mitotic spindle orientation during early stages of mitosis by mediating phosphorylation of TPPP. Displays serine/threonine-specific phosphorylation of myelin basic protein and histone (MBP) in vitro. Suppresses ciliogenesis via multiple pathways; phosphorylation of CFL1, suppression of directional trafficking of ciliary vesicles to the ciliary base, and by facilitating YAP1 nuclear localization where it acts as a transcriptional corepressor of the TEAD4 target genes AURKA and PLK1. The protein is LIM domain kinase 2 (Limk2) of Mus musculus (Mouse).